Consider the following 456-residue polypeptide: Chromosomal replication initiator protein DnaA 1 (456 aa).

The tract at residues 1–68 (MRAWEEFLLL…KANLINNNGK (68 aa)) is domain I, interacts with DnaA modulators. A domain II region spans residues 68–101 (KPIRVRVTSLDKSTPFKESQIQQEKTAYFTMQYG). The domain III, AAA+ region stretch occupies residues 102–320 (DIDPQMSFAN…HALTTLAKRV (219 aa)). Residues serine 150, glycine 152, lysine 153, and threonine 154 each contribute to the ATP site. Positions 321–456 (AYKKLSHQLL…AYQSLDLIVD (136 aa)) are domain IV, binds dsDNA.

The protein belongs to the DnaA family. In terms of assembly, oligomerizes as a right-handed, spiral filament on DNA at oriC.

It is found in the cytoplasm. Functionally, plays an essential role in the initiation and regulation of chromosomal replication. ATP-DnaA binds to the origin of replication (oriC) to initiate formation of the DNA replication initiation complex once per cell cycle. Binds the DnaA box (a 9 base pair repeat at the origin) and separates the double-stranded (ds)DNA. Forms a right-handed helical filament on oriC DNA; dsDNA binds to the exterior of the filament while single-stranded (ss)DNA is stabiized in the filament's interior. The ATP-DnaA-oriC complex binds and stabilizes one strand of the AT-rich DNA unwinding element (DUE), permitting loading of DNA polymerase. After initiation quickly degrades to an ADP-DnaA complex that is not apt for DNA replication. Binds acidic phospholipids. The polypeptide is Chromosomal replication initiator protein DnaA 1 (Chlamydia muridarum (strain MoPn / Nigg)).